Consider the following 357-residue polypeptide: Phosphoserine aminotransferase (357 aa).

L-glutamate is bound at residue arginine 41. Residues 75 to 76, tryptophan 100, threonine 150, aspartate 170, and glutamine 193 each bind pyridoxal 5'-phosphate; that span reads GT. The residue at position 194 (lysine 194) is an N6-(pyridoxal phosphate)lysine. A pyridoxal 5'-phosphate-binding site is contributed by 234–235; that stretch reads NT.

The protein belongs to the class-V pyridoxal-phosphate-dependent aminotransferase family. SerC subfamily. Homodimer. It depends on pyridoxal 5'-phosphate as a cofactor.

The protein resides in the cytoplasm. The catalysed reaction is O-phospho-L-serine + 2-oxoglutarate = 3-phosphooxypyruvate + L-glutamate. It carries out the reaction 4-(phosphooxy)-L-threonine + 2-oxoglutarate = (R)-3-hydroxy-2-oxo-4-phosphooxybutanoate + L-glutamate. It participates in amino-acid biosynthesis; L-serine biosynthesis; L-serine from 3-phospho-D-glycerate: step 2/3. Functionally, catalyzes the reversible conversion of 3-phosphohydroxypyruvate to phosphoserine and of 3-hydroxy-2-oxo-4-phosphonooxybutanoate to phosphohydroxythreonine. In Lactiplantibacillus plantarum (strain ATCC BAA-793 / NCIMB 8826 / WCFS1) (Lactobacillus plantarum), this protein is Phosphoserine aminotransferase.